The chain runs to 651 residues: Macrolide export ATP-binding/permease protein MacB (651 aa).

Residues 2–239 enclose the ABC transporter domain; the sequence is IEIVNVTKTY…PQMPQGGMEA (238 aa). 38–45 serves as a coordination point for ATP; that stretch reads GASGSGKS. The next 4 membrane-spanning stretches (helical) occupy residues 269-289, 532-552, 589-609, and 614-634; these read FLSVLGILVGVASVIAMMALG, IAAISLVVGGIGIMNIMLVSV, IIGIVVGVGVSVMLSAFAGWA, and MFSVVLATGFSVLIGLFFGLW.

Belongs to the ABC transporter superfamily. Macrolide exporter (TC 3.A.1.122) family. In terms of assembly, homodimer.

Its subcellular location is the cell inner membrane. Non-canonical ABC transporter that contains transmembrane domains (TMD), which form a pore in the inner membrane, and an ATP-binding domain (NBD), which is responsible for energy generation. Confers resistance against macrolides. This Chlorobaculum tepidum (strain ATCC 49652 / DSM 12025 / NBRC 103806 / TLS) (Chlorobium tepidum) protein is Macrolide export ATP-binding/permease protein MacB.